Consider the following 885-residue polypeptide: Alanine--tRNA ligase (885 aa).

Basic and acidic residues predominate over residues 426–444 (QEQKTRARQDRREKQRGGA). The interval 426 to 445 (QEQKTRARQDRREKQRGGAE) is disordered. Zn(2+)-binding residues include His568, His572, Cys671, and His675.

The protein belongs to the class-II aminoacyl-tRNA synthetase family. The cofactor is Zn(2+).

It is found in the cytoplasm. It catalyses the reaction tRNA(Ala) + L-alanine + ATP = L-alanyl-tRNA(Ala) + AMP + diphosphate. In terms of biological role, catalyzes the attachment of alanine to tRNA(Ala) in a two-step reaction: alanine is first activated by ATP to form Ala-AMP and then transferred to the acceptor end of tRNA(Ala). Also edits incorrectly charged Ser-tRNA(Ala) and Gly-tRNA(Ala) via its editing domain. This is Alanine--tRNA ligase from Chlorobium phaeovibrioides (strain DSM 265 / 1930) (Prosthecochloris vibrioformis (strain DSM 265)).